The sequence spans 384 residues: 4-hydroxy-3-methylbut-2-en-1-yl diphosphate synthase (flavodoxin) (384 aa).

Residues C280, C283, C315, and E322 each coordinate [4Fe-4S] cluster.

The protein belongs to the IspG family. [4Fe-4S] cluster is required as a cofactor.

It catalyses the reaction (2E)-4-hydroxy-3-methylbut-2-enyl diphosphate + oxidized [flavodoxin] + H2O + 2 H(+) = 2-C-methyl-D-erythritol 2,4-cyclic diphosphate + reduced [flavodoxin]. It participates in isoprenoid biosynthesis; isopentenyl diphosphate biosynthesis via DXP pathway; isopentenyl diphosphate from 1-deoxy-D-xylulose 5-phosphate: step 5/6. Converts 2C-methyl-D-erythritol 2,4-cyclodiphosphate (ME-2,4cPP) into 1-hydroxy-2-methyl-2-(E)-butenyl 4-diphosphate. The protein is 4-hydroxy-3-methylbut-2-en-1-yl diphosphate synthase (flavodoxin) of Frankia alni (strain DSM 45986 / CECT 9034 / ACN14a).